Consider the following 140-residue polypeptide: Holo-[acyl-carrier-protein] synthase (140 aa).

Mg(2+) is bound by residues aspartate 8 and glutamate 62.

This sequence belongs to the P-Pant transferase superfamily. AcpS family. The cofactor is Mg(2+).

The protein localises to the cytoplasm. It carries out the reaction apo-[ACP] + CoA = holo-[ACP] + adenosine 3',5'-bisphosphate + H(+). Transfers the 4'-phosphopantetheine moiety from coenzyme A to a Ser of acyl-carrier-protein. The polypeptide is Holo-[acyl-carrier-protein] synthase (Cupriavidus pinatubonensis (strain JMP 134 / LMG 1197) (Cupriavidus necator (strain JMP 134))).